Reading from the N-terminus, the 312-residue chain is uncharacterized protein (312 aa).

The next 10 helical transmembrane spans lie at 11 to 31 (IAAILYSFIIGLSFLFVKIAL), 46 to 66 (IAFAAATVPILFGWVKLSIRV), 72 to 92 (ILPLALLYPALFFSFQAFGLV), 98 to 118 (EAGIIQAAIPIFTMVFAAYVL), 128 to 148 (GFTVLSVAGVMFIFVMKGVDV), 155 to 171 (GSLLILLSALSSAMYNT), 183 to 203 (TELTYIMSAIGFVVFNAIALV), 221 to 241 (PGFVLAIVYLGVLSSLVTSFL), 254 to 274 (MSAFNHVSTIVTMIAGFVILN), and 277 to 297 (LAWYHLAGAVCIMIGVVGSNI). 2 EamA domains span residues 18-142 (FIIG…FIFV) and 164-297 (LSSA…GSNI).

Belongs to the EamA transporter family.

The protein resides in the cell membrane. This is an uncharacterized protein from Bacillus subtilis (strain 168).